A 409-amino-acid polypeptide reads, in one-letter code: Tyrosine--tRNA ligase (409 aa).

Y39 serves as a coordination point for L-tyrosine. Residues 44 to 53 (PTAPSLHVGS) carry the 'HIGH' region motif. 2 residues coordinate L-tyrosine: Y176 and Q180. Positions 236 to 240 (KMGKT) match the 'KMSKS' region motif. K239 contributes to the ATP binding site. An S4 RNA-binding domain is found at 346–409 (IGIVDALVGL…KKKHGILRKA (64 aa)).

It belongs to the class-I aminoacyl-tRNA synthetase family. TyrS type 1 subfamily. In terms of assembly, homodimer.

Its subcellular location is the cytoplasm. The enzyme catalyses tRNA(Tyr) + L-tyrosine + ATP = L-tyrosyl-tRNA(Tyr) + AMP + diphosphate + H(+). Catalyzes the attachment of tyrosine to tRNA(Tyr) in a two-step reaction: tyrosine is first activated by ATP to form Tyr-AMP and then transferred to the acceptor end of tRNA(Tyr). In Novosphingobium aromaticivorans (strain ATCC 700278 / DSM 12444 / CCUG 56034 / CIP 105152 / NBRC 16084 / F199), this protein is Tyrosine--tRNA ligase.